The following is a 380-amino-acid chain: Cytochrome b (380 aa).

The next 4 membrane-spanning stretches (helical) occupy residues F33–M53, W77–V98, W113–L133, and F178–L198. Heme b-binding residues include H83 and H97. Residues H182 and H196 each coordinate heme b. H201 is a binding site for a ubiquinone. 4 helical membrane-spanning segments follow: residues I226–F246, L288–N308, I320–G340, and F347–P367.

This sequence belongs to the cytochrome b family. As to quaternary structure, the cytochrome bc1 complex contains 11 subunits: 3 respiratory subunits (MT-CYB, CYC1 and UQCRFS1), 2 core proteins (UQCRC1 and UQCRC2) and 6 low-molecular weight proteins (UQCRH/QCR6, UQCRB/QCR7, UQCRQ/QCR8, UQCR10/QCR9, UQCR11/QCR10 and a cleavage product of UQCRFS1). This cytochrome bc1 complex then forms a dimer. It depends on heme b as a cofactor.

It is found in the mitochondrion inner membrane. In terms of biological role, component of the ubiquinol-cytochrome c reductase complex (complex III or cytochrome b-c1 complex) that is part of the mitochondrial respiratory chain. The b-c1 complex mediates electron transfer from ubiquinol to cytochrome c. Contributes to the generation of a proton gradient across the mitochondrial membrane that is then used for ATP synthesis. This is Cytochrome b (MT-CYB) from Microryzomys minutus (Forest small rice rat).